A 393-amino-acid polypeptide reads, in one-letter code: Probable alpha-1,6-mannosyltransferase MNN10 (393 aa).

Over 1-52 (MSSVPYNSQLPISNHLEYDEDEKKSRGSKLGLKYKMIYWRKTLCSSLARWRK) the chain is Cytoplasmic. A helical; Signal-anchor for type II membrane protein membrane pass occupies residues 53-73 (LILLISLALFLFIWISDSTIS). Residues 74-393 (RNPSTTSFQG…RKWYTRFFFP (320 aa)) lie on the Lumenal side of the membrane. The tract at residues 77–97 (STTSFQGQNSNDNKLSNTGSS) is disordered.

Belongs to the glycosyltransferase 34 family. Component of the M-Pol II complex composed of ANP1, MNN9, MNN10, MNN11 and HOC1.

The protein resides in the endoplasmic reticulum membrane. It localises to the golgi apparatus. The protein localises to the cis-Golgi network membrane. Functionally, required for polarized growth and efficient budding. Its function is as follows. The M-Pol II complex possesses alpha-1,6-mannosyltransferase activity and is probably involved in the elongation of the mannan backbone of N-linked glycans on cell wall and periplasmic proteins. The polypeptide is Probable alpha-1,6-mannosyltransferase MNN10 (MNN10) (Saccharomyces cerevisiae (strain ATCC 204508 / S288c) (Baker's yeast)).